The chain runs to 140 residues: MLEPKRTKYRRPHKVSYEGKAKGNKYVAFGEFGLMATNGAWISNRQIESARIAISKALGKTGKMWIRIFPHLSLTKKPLEVRMGSGKGSPEKWVAVVKAGTVMFEVANIPEEVARTALKNAGNKLSVNWKIVKKGEIAHD.

The protein belongs to the universal ribosomal protein uL16 family. As to quaternary structure, part of the 50S ribosomal subunit.

Functionally, binds 23S rRNA and is also seen to make contacts with the A and possibly P site tRNAs. In Malacoplasma penetrans (strain HF-2) (Mycoplasma penetrans), this protein is Large ribosomal subunit protein uL16.